The chain runs to 477 residues: Glycogen synthase (477 aa).

Position 15 (K15) interacts with ADP-alpha-D-glucose.

It belongs to the glycosyltransferase 1 family. Bacterial/plant glycogen synthase subfamily.

The enzyme catalyses [(1-&gt;4)-alpha-D-glucosyl](n) + ADP-alpha-D-glucose = [(1-&gt;4)-alpha-D-glucosyl](n+1) + ADP + H(+). It functions in the pathway glycan biosynthesis; glycogen biosynthesis. Functionally, synthesizes alpha-1,4-glucan chains using ADP-glucose. The chain is Glycogen synthase from Streptococcus pneumoniae (strain Hungary19A-6).